Reading from the N-terminus, the 226-residue chain is Putative N-acetylmannosamine-6-phosphate 2-epimerase 1 (226 aa).

Belongs to the NanE family.

It catalyses the reaction an N-acyl-D-glucosamine 6-phosphate = an N-acyl-D-mannosamine 6-phosphate. The protein operates within amino-sugar metabolism; N-acetylneuraminate degradation; D-fructose 6-phosphate from N-acetylneuraminate: step 3/5. In terms of biological role, converts N-acetylmannosamine-6-phosphate (ManNAc-6-P) to N-acetylglucosamine-6-phosphate (GlcNAc-6-P). This Salmonella typhimurium (strain LT2 / SGSC1412 / ATCC 700720) protein is Putative N-acetylmannosamine-6-phosphate 2-epimerase 1 (nanE1).